Reading from the N-terminus, the 217-residue chain is Dephospho-CoA kinase (217 aa).

Residues 4–203 enclose the DPCK domain; sequence IVALTGGISS…SHLSRIYNKN (200 aa). 12–17 is an ATP binding site; that stretch reads SSGKTT.

Belongs to the CoaE family.

Its subcellular location is the cytoplasm. It carries out the reaction 3'-dephospho-CoA + ATP = ADP + CoA + H(+). It participates in cofactor biosynthesis; coenzyme A biosynthesis; CoA from (R)-pantothenate: step 5/5. Functionally, catalyzes the phosphorylation of the 3'-hydroxyl group of dephosphocoenzyme A to form coenzyme A. This is Dephospho-CoA kinase from Buchnera aphidicola subsp. Acyrthosiphon pisum (strain APS) (Acyrthosiphon pisum symbiotic bacterium).